The primary structure comprises 219 residues: ATP phosphoribosyltransferase (219 aa).

It belongs to the ATP phosphoribosyltransferase family. Short subfamily. As to quaternary structure, heteromultimer composed of HisG and HisZ subunits.

Its subcellular location is the cytoplasm. The catalysed reaction is 1-(5-phospho-beta-D-ribosyl)-ATP + diphosphate = 5-phospho-alpha-D-ribose 1-diphosphate + ATP. It participates in amino-acid biosynthesis; L-histidine biosynthesis; L-histidine from 5-phospho-alpha-D-ribose 1-diphosphate: step 1/9. In terms of biological role, catalyzes the condensation of ATP and 5-phosphoribose 1-diphosphate to form N'-(5'-phosphoribosyl)-ATP (PR-ATP). Has a crucial role in the pathway because the rate of histidine biosynthesis seems to be controlled primarily by regulation of HisG enzymatic activity. In Clostridium kluyveri (strain NBRC 12016), this protein is ATP phosphoribosyltransferase.